Here is a 120-residue protein sequence, read N- to C-terminus: NAD(P)H-quinone oxidoreductase subunit 3, chloroplastic (120 aa).

3 consecutive transmembrane segments (helical) span residues 9 to 29 (IFWA…LISG), 64 to 84 (MFAL…PWAM), and 88 to 108 (VLGV…ILGL).

It belongs to the complex I subunit 3 family. As to quaternary structure, NDH is composed of at least 16 different subunits, 5 of which are encoded in the nucleus.

It localises to the plastid. Its subcellular location is the chloroplast thylakoid membrane. It catalyses the reaction a plastoquinone + NADH + (n+1) H(+)(in) = a plastoquinol + NAD(+) + n H(+)(out). The enzyme catalyses a plastoquinone + NADPH + (n+1) H(+)(in) = a plastoquinol + NADP(+) + n H(+)(out). Functionally, NDH shuttles electrons from NAD(P)H:plastoquinone, via FMN and iron-sulfur (Fe-S) centers, to quinones in the photosynthetic chain and possibly in a chloroplast respiratory chain. The immediate electron acceptor for the enzyme in this species is believed to be plastoquinone. Couples the redox reaction to proton translocation, and thus conserves the redox energy in a proton gradient. This Lobularia maritima (Sweet alyssum) protein is NAD(P)H-quinone oxidoreductase subunit 3, chloroplastic.